We begin with the raw amino-acid sequence, 345 residues long: Anthranilate phosphoribosyltransferase (345 aa).

Residues G83, 86 to 87, T91, 93 to 96, 111 to 119, and S123 each bind 5-phospho-alpha-D-ribose 1-diphosphate; these read GD, NIST, and KHGNRNLSS. G83 contributes to the anthranilate binding site. Position 95 (S95) interacts with Mg(2+). N114 is a binding site for anthranilate. R169 is an anthranilate binding site. Residues D228 and E229 each contribute to the Mg(2+) site.

Belongs to the anthranilate phosphoribosyltransferase family. As to quaternary structure, homodimer. The cofactor is Mg(2+).

It catalyses the reaction N-(5-phospho-beta-D-ribosyl)anthranilate + diphosphate = 5-phospho-alpha-D-ribose 1-diphosphate + anthranilate. The protein operates within amino-acid biosynthesis; L-tryptophan biosynthesis; L-tryptophan from chorismate: step 2/5. Functionally, catalyzes the transfer of the phosphoribosyl group of 5-phosphorylribose-1-pyrophosphate (PRPP) to anthranilate to yield N-(5'-phosphoribosyl)-anthranilate (PRA). This chain is Anthranilate phosphoribosyltransferase, found in Paracoccus denitrificans (strain Pd 1222).